Reading from the N-terminus, the 254-residue chain is Imidazole glycerol phosphate synthase subunit HisF (254 aa).

Residues D13 and D132 contribute to the active site.

It belongs to the HisA/HisF family. In terms of assembly, heterodimer of HisH and HisF.

It localises to the cytoplasm. The enzyme catalyses 5-[(5-phospho-1-deoxy-D-ribulos-1-ylimino)methylamino]-1-(5-phospho-beta-D-ribosyl)imidazole-4-carboxamide + L-glutamine = D-erythro-1-(imidazol-4-yl)glycerol 3-phosphate + 5-amino-1-(5-phospho-beta-D-ribosyl)imidazole-4-carboxamide + L-glutamate + H(+). It functions in the pathway amino-acid biosynthesis; L-histidine biosynthesis; L-histidine from 5-phospho-alpha-D-ribose 1-diphosphate: step 5/9. Its function is as follows. IGPS catalyzes the conversion of PRFAR and glutamine to IGP, AICAR and glutamate. The HisF subunit catalyzes the cyclization activity that produces IGP and AICAR from PRFAR using the ammonia provided by the HisH subunit. The sequence is that of Imidazole glycerol phosphate synthase subunit HisF from Wolinella succinogenes (strain ATCC 29543 / DSM 1740 / CCUG 13145 / JCM 31913 / LMG 7466 / NCTC 11488 / FDC 602W) (Vibrio succinogenes).